The sequence spans 404 residues: Deoxyguanosinetriphosphate triphosphohydrolase-like protein (404 aa).

The interval 1–33 (MSVGMAAPRAAYGCDPDRSRGRQFAEPPSNNRS) is disordered. One can recognise an HD domain in the interval 69–217 (RLTHSLEVAQ…AAIADDIAYD (149 aa)).

This sequence belongs to the dGTPase family. Type 2 subfamily.

In Rhodopseudomonas palustris (strain BisB5), this protein is Deoxyguanosinetriphosphate triphosphohydrolase-like protein.